The sequence spans 190 residues: Peptidoglycan recognition protein 1 (190 aa).

The N-terminal stretch at 1 to 21 is a signal peptide; the sequence is MSRRYTPLAWVLLALLGLGAA. A Pyrrolidone carboxylic acid modification is found at Gln-22. 3 cysteine pairs are disulfide-bonded: Cys-24-Cys-148, Cys-40-Cys-85, and Cys-61-Cys-67. The N-acetylmuramoyl-L-alanine amidase domain maps to 46 to 174; that stretch reads QPVRYVVVSH…RDVQQTLSPG (129 aa).

Belongs to the N-acetylmuramoyl-L-alanine amidase 2 family. As to quaternary structure, homodimer; disulfide-linked. Synthesized only in bone marrow. The mature protein is stored in the cytoplasmic granules of eosinophils and neutrophils but is absent from monocytes, lymphocytes, or platelets.

It localises to the secreted. Its subcellular location is the cytoplasmic granule. Innate immunity protein that plays several important functions in antimicrobial and antitumor defense systems. Acts as a pattern receptor that binds to murein peptidoglycans (PGN) of Gram-positive bacteria and thus provides bactericidal activity. Forms an equimolar complex with heat shock protein HSPA1A and induces programmed cell death through apoptosis and necroptosis in tumor cell lines by activating the TNFR1 receptor on the target cell membrane. In addition, acts in complex with the Ca(2+)-binding protein S100A4 as a chemoattractant able to induce lymphocyte movement. Mechanistically, this complex acts as a ligand of the chemotactic receptors CCR5 and CXCR3 which are present on the cells of the immune system. Also promotes the activation of lymphocytes that become able to kill virus-infected cells as well as tumor cells by modulating the spectrum of their target-cell specificity. Induction of cytotoxicity on monocyte surface requires interaction with TREM1 receptor. The protein is Peptidoglycan recognition protein 1 (PGLYRP1) of Bos taurus (Bovine).